Consider the following 225-residue polypeptide: Phosphoenolpyruvate guanylyltransferase (225 aa).

The phosphoenolpyruvate site is built by Thr150, Gly166, and Ser169. Residues 167–186 (PESARGHANSGARPLNGQWP) are disordered.

It belongs to the CofC family.

The catalysed reaction is phosphoenolpyruvate + GTP + H(+) = enolpyruvoyl-2-diphospho-5'-guanosine + diphosphate. It participates in cofactor biosynthesis; coenzyme F420 biosynthesis. Its function is as follows. Guanylyltransferase that catalyzes the activation of phosphoenolpyruvate (PEP) as enolpyruvoyl-2-diphospho-5'-guanosine, via the condensation of PEP with GTP. It is involved in the biosynthesis of coenzyme F420, a hydride carrier cofactor. The polypeptide is Phosphoenolpyruvate guanylyltransferase (Rhodococcus erythropolis (strain PR4 / NBRC 100887)).